Consider the following 198-residue polypeptide: V-type ATP synthase subunit E (198 aa).

The protein belongs to the V-ATPase E subunit family.

Its function is as follows. Produces ATP from ADP in the presence of a proton gradient across the membrane. The protein is V-type ATP synthase subunit E of Clostridium novyi (strain NT).